Here is a 192-residue protein sequence, read N- to C-terminus: UPF0301 protein Bmul_2524/BMULJ_00714 (192 aa).

The protein belongs to the UPF0301 (AlgH) family.

The polypeptide is UPF0301 protein Bmul_2524/BMULJ_00714 (Burkholderia multivorans (strain ATCC 17616 / 249)).